A 1320-amino-acid polypeptide reads, in one-letter code: Poly [ADP-ribose] polymerase tankyrase-1 (1320 aa).

Basic residues predominate over residues 1–15; it reads MAASRRSQHHHHHHQ. Disordered regions lie at residues 1–88 and 111–152; these read MAAS…DGAV and AGGG…AAGV. Residues 25–46 show a composition bias toward pro residues; it reads SAPPPPPPPPLSPGLAPGPTPA. The span at 69 to 82 shows a compositional bias: basic and acidic residues; it reads DGSRDPPDRPRSPD. Residues 120–152 show a composition bias toward low complexity; the sequence is NSASSASSPTSSSSSSPSSPGSSLAESPEAAGV. 18 ANK repeats span residues 174–202, 208–237, 241–270, 274–303, 361–390, 394–423, 427–456, 514–546, 550–579, 583–612, 676–705, 709–738, 742–771, 775–803, 829–858, 862–891, 895–924, and 928–957; these read GALRELLEACRNGDVSRVKRLVDAANVNA, RKSSPLHFAAGFGRKDVVEHLLQMGANVHA, GGLIPLHNACSFGHAEVVSLLLCQGADPNA, WNYTPLHEAAIKGKIDVCIVLLQHGADPNI, RKSTPLHLAAGYNRVRIVQLLLQHGADVHA, GGLVPLHNACSYGHYEVTELLLKHGACVNA, WQFTPLHEAASKNRVEVCSLLLSHGADPTL, SHETALHCAVASLHPKRKQVAELLLRKGANVNE, DFMTPLHVAAERAHNDVMEVLHKHGAKMNA, LGQTALHRAALAGHLQTCRLLLSYGSDPSI, RHSTPLHFAAGYNRVSVVEYLLHHGADVHA, GGLVPLHNACSYGHYEVAELLVRHGASVNV, WKFTPLHEAAAKGKYEICKLLLKHGADPTK, DGNTPLDLVKEGDTDIQDLLRGDAALLDA, RNSTPLHLAAGYNNLEVAEYLLEHGADVNA, GGLIPLHNAASYGHVDIAALLIKYNTCVNA, WAFTPLHEAAQKGRTQLCALLLAHGADPTM, and EGQTPLDLATADDIRALLIDAMPPEALPTC. The SAM domain occupies 1019–1082; it reads GLDMNISQFL…IKGVERLLGG (64 aa). A PARP catalytic domain is found at 1105-1310; the sequence is APEDKEYQSV…YQIMKPEAPS (206 aa). Residues cysteine 1227, histidine 1230, cysteine 1235, and cysteine 1238 each contribute to the Zn(2+) site.

This sequence belongs to the ARTD/PARP family. Oligomerizes and associates with TNKS2. Interacts with the cytoplasmic domain of LNPEP/Otase in SLC2A4/GLUT4-vesicles. Binds to the N-terminus of telomeric TERF1 via the ANK repeats. Found in a complex with POT1; TERF1 and TINF2. Interacts with AXIN1. Interacts with AXIN2. Interacts with BLZF1 and CASC3. Interacts with NUMA1. Phosphorylated on serine residues by MAPK kinases upon insulin stimulation. Phosphorylated during mitosis. In terms of processing, ubiquitinated by RNF146 when auto-poly-ADP-ribosylated, leading to its degradation. Post-translationally, ADP-ribosylated (-auto). Poly-ADP-ribosylated protein is recognized by RNF146, followed by ubiquitination.

The protein resides in the cytoplasm. Its subcellular location is the golgi apparatus membrane. It localises to the cytoskeleton. The protein localises to the microtubule organizing center. It is found in the centrosome. The protein resides in the nucleus. Its subcellular location is the nuclear pore complex. It localises to the chromosome. The protein localises to the telomere. It is found in the spindle pole. The catalysed reaction is NAD(+) + (ADP-D-ribosyl)n-acceptor = nicotinamide + (ADP-D-ribosyl)n+1-acceptor + H(+).. The enzyme catalyses L-aspartyl-[protein] + NAD(+) = 4-O-(ADP-D-ribosyl)-L-aspartyl-[protein] + nicotinamide. It carries out the reaction L-glutamyl-[protein] + NAD(+) = 5-O-(ADP-D-ribosyl)-L-glutamyl-[protein] + nicotinamide. Poly-ADP-ribosyltransferase involved in various processes such as Wnt signaling pathway, telomere length and vesicle trafficking. Acts as an activator of the Wnt signaling pathway by mediating poly-ADP-ribosylation (PARsylation) of AXIN1 and AXIN2, 2 key components of the beta-catenin destruction complex: poly-ADP-ribosylated target proteins are recognized by RNF146, which mediates their ubiquitination and subsequent degradation. Also mediates PARsylation of BLZF1 and CASC3, followed by recruitment of RNF146 and subsequent ubiquitination. Mediates PARsylation of TERF1, thereby contributing to the regulation of telomere length. Involved in centrosome maturation during prometaphase by mediating PARsylation of HEPACAM2/MIKI. May also regulate vesicle trafficking and modulate the subcellular distribution of SLC2A4/GLUT4-vesicles. May be involved in spindle pole assembly through PARsylation of NUMA1. Stimulates 26S proteasome activity. This Mus musculus (Mouse) protein is Poly [ADP-ribose] polymerase tankyrase-1 (Tnks).